A 142-amino-acid chain; its full sequence is C-type lectin 13 (142 aa).

An N-terminal signal peptide occupies residues 1-23; that stretch reads MGRLVFVSFGGWDVFLSLSGTGA. 3 disulfide bridges follow: C25/C36, C53/C138, and C115/C130. The C-type lectin domain maps to 32–139; sequence YEGHCYRVFQ…CSKTHNVVCK (108 aa).

The protein belongs to the snaclec family. In terms of assembly, heteromultimer; disulfide-linked. As to expression, expressed by the venom gland.

Its subcellular location is the secreted. In terms of biological role, interferes with one step of hemostasis (modulation of platelet aggregation, or coagulation cascade, for example). The sequence is that of C-type lectin 13 from Crotalus adamanteus (Eastern diamondback rattlesnake).